We begin with the raw amino-acid sequence, 489 residues long: N-succinylglutamate 5-semialdehyde dehydrogenase (489 aa).

An NAD(+)-binding site is contributed by 223–228; that stretch reads GSASTG. Catalysis depends on residues glutamate 246 and cysteine 280.

Belongs to the aldehyde dehydrogenase family. AstD subfamily.

It carries out the reaction N-succinyl-L-glutamate 5-semialdehyde + NAD(+) + H2O = N-succinyl-L-glutamate + NADH + 2 H(+). Its pathway is amino-acid degradation; L-arginine degradation via AST pathway; L-glutamate and succinate from L-arginine: step 4/5. Catalyzes the NAD-dependent reduction of succinylglutamate semialdehyde into succinylglutamate. This chain is N-succinylglutamate 5-semialdehyde dehydrogenase, found in Acinetobacter baylyi (strain ATCC 33305 / BD413 / ADP1).